The chain runs to 566 residues: Autophagy-related protein 22-1 (566 aa).

The chain crosses the membrane as a helical span at residues 38 to 58 (YPIAAEVFAVVAVGAFLPVIL). N-linked (GlcNAc...) asparagine glycosylation occurs at Asn-103. 3 helical membrane passes run 110–130 (SFAMYTFSAAVIVQAVTLVCF), 146–168 (AFAYTGSVASALFIFISPTVYFL), and 179–199 (SLGCSFVLLNAFLPLLVANHA). Residue Asn-200 is glycosylated (N-linked (GlcNAc...) asparagine). A run of 8 helical transmembrane segments spans residues 242–262 (GYGYMAAVFVQVISILILWLF), 278–298 (VILLLVGMWWAALTTPTLLWL), 351–371 (FLISWFLLSDAVATISGTAVL), 382–402 (IAIALLSITSIGSGIIGAFAW), 416–436 (ILLCCVAGMEMIPLYGLLGFI), 451–471 (WEIYPVAVLHGIVMGGVSSYA), 488–510 (FALYAVTDKGSSAFGPALVGWLV), and 519–539 (AFIFLAVLVVLPAPLLWMLDV). The segment at 547–566 (KAMADGEGRGRGTYERVREE) is disordered.

It belongs to the ATG22 family.

The protein localises to the vacuole membrane. Vacuolar effluxer which mediate the efflux of amino acids resulting from autophagic degradation. The release of autophagic amino acids allows the maintenance of protein synthesis and viability during nitrogen starvation. The protein is Autophagy-related protein 22-1 (ATG22-1) of Phaeosphaeria nodorum (strain SN15 / ATCC MYA-4574 / FGSC 10173) (Glume blotch fungus).